The sequence spans 179 residues: Large ribosomal subunit protein uL5 (179 aa).

The protein belongs to the universal ribosomal protein uL5 family. In terms of assembly, part of the 50S ribosomal subunit; part of the 5S rRNA/L5/L18/L25 subcomplex. Contacts the 5S rRNA and the P site tRNA. Forms a bridge to the 30S subunit in the 70S ribosome.

In terms of biological role, this is one of the proteins that bind and probably mediate the attachment of the 5S RNA into the large ribosomal subunit, where it forms part of the central protuberance. In the 70S ribosome it contacts protein S13 of the 30S subunit (bridge B1b), connecting the 2 subunits; this bridge is implicated in subunit movement. Contacts the P site tRNA; the 5S rRNA and some of its associated proteins might help stabilize positioning of ribosome-bound tRNAs. This chain is Large ribosomal subunit protein uL5, found in Shewanella piezotolerans (strain WP3 / JCM 13877).